A 571-amino-acid chain; its full sequence is Urease subunit alpha (571 aa).

The 439-residue stretch at 133–571 (GGIDTHVHFI…LPLTQRYFLF (439 aa)) folds into the Urease domain. Residues His138, His140, and Lys221 each contribute to the Ni(2+) site. Lys221 carries the N6-carboxylysine modification. His223 provides a ligand contact to substrate. Ni(2+) is bound by residues His250 and His276. The active-site Proton donor is His324. Asp364 lines the Ni(2+) pocket.

The protein belongs to the metallo-dependent hydrolases superfamily. Urease alpha subunit family. Heterotrimer of UreA (gamma), UreB (beta) and UreC (alpha) subunits. Three heterotrimers associate to form the active enzyme. Ni cation is required as a cofactor. In terms of processing, carboxylation allows a single lysine to coordinate two nickel ions.

The protein localises to the cytoplasm. It carries out the reaction urea + 2 H2O + H(+) = hydrogencarbonate + 2 NH4(+). It participates in nitrogen metabolism; urea degradation; CO(2) and NH(3) from urea (urease route): step 1/1. The polypeptide is Urease subunit alpha (Staphylococcus aureus (strain bovine RF122 / ET3-1)).